The following is a 197-amino-acid chain: Dephospho-CoA kinase (197 aa).

The 196-residue stretch at Ile2–Arg197 folds into the DPCK domain. Ala10–Thr15 is an ATP binding site.

This sequence belongs to the CoaE family.

The protein localises to the cytoplasm. It catalyses the reaction 3'-dephospho-CoA + ATP = ADP + CoA + H(+). It functions in the pathway cofactor biosynthesis; coenzyme A biosynthesis; CoA from (R)-pantothenate: step 5/5. Catalyzes the phosphorylation of the 3'-hydroxyl group of dephosphocoenzyme A to form coenzyme A. This Streptococcus pyogenes serotype M3 (strain ATCC BAA-595 / MGAS315) protein is Dephospho-CoA kinase.